Consider the following 985-residue polypeptide: Alanine--tRNA ligase, mitochondrial (985 aa).

The N-terminal 23 residues, 1 to 23, are a transit peptide targeting the mitochondrion; sequence MAASVAAAARRLRRAIRRSPAWR. Residues Arg110, His128, Trp210, and 240-242 each bind ATP; that span reads LWN. Positions 242 and 265 each coordinate L-alanine. Residue Gly269 participates in ATP binding. Residues His632, His636, Cys749, and His753 each coordinate Zn(2+).

Belongs to the class-II aminoacyl-tRNA synthetase family. As to quaternary structure, monomer. Zn(2+) serves as cofactor.

The protein resides in the mitochondrion. The enzyme catalyses tRNA(Ala) + L-alanine + ATP = L-alanyl-tRNA(Ala) + AMP + diphosphate. It catalyses the reaction (S)-lactate + ATP + H(+) = (S)-lactoyl-AMP + diphosphate. It carries out the reaction (S)-lactoyl-AMP + L-lysyl-[protein] = N(6)-[(S)-lactoyl]-L-lysyl-[protein] + AMP + 2 H(+). Its function is as follows. Catalyzes the attachment of alanine to tRNA(Ala) in a two-step reaction: alanine is first activated by ATP to form Ala-AMP and then transferred to the acceptor end of tRNA(Ala). Also edits incorrectly charged tRNA(Ala) via its editing domain. In presence of high levels of lactate, also acts as a protein lactyltransferase that mediates lactylation of lysine residues in target proteins, such as CGAS. Acts as an inhibitor of cGAS/STING signaling by catalyzing lactylation of CGAS, preventing the formation of liquid-like droplets in which CGAS is activated. The sequence is that of Alanine--tRNA ligase, mitochondrial from Homo sapiens (Human).